Consider the following 39-residue polypeptide: Omega-theraphotoxin-Asp1a (39 aa).

3 cysteine pairs are disulfide-bonded: Cys-4/Cys-25, Cys-8/Cys-31, and Cys-17/Cys-36.

In terms of tissue distribution, expressed by the venom gland.

It is found in the secreted. In terms of biological role, toxin that inhibits voltage-gated calcium channels in rat cerebellar granule cells (IC(50)&lt;200 nM). Is lethal to cockroaches. The protein is Omega-theraphotoxin-Asp1a of Aphonopelma sp. (American tarantula).